The sequence spans 93 residues: Small ribosomal subunit protein uS19m (93 aa).

Belongs to the universal ribosomal protein uS19 family. As to quaternary structure, component of the mitochondrial small ribosomal subunit (mt-SSU). Mature yeast 74S mitochondrial ribosomes consist of a small (37S) and a large (54S) subunit. The 37S small subunit contains a 15S ribosomal RNA (15S mt-rRNA) and at least 32 different proteins. The 54S large subunit contains a 21S rRNA (21S mt-rRNA) and at least 45 different proteins.

It localises to the mitochondrion. Functionally, component of the mitochondrial ribosome (mitoribosome), a dedicated translation machinery responsible for the synthesis of mitochondrial genome-encoded proteins, including at least some of the essential transmembrane subunits of the mitochondrial respiratory chain. The mitoribosomes are attached to the mitochondrial inner membrane and translation products are cotranslationally integrated into the membrane. The protein is Small ribosomal subunit protein uS19m (rsm19) of Schizosaccharomyces pombe (strain 972 / ATCC 24843) (Fission yeast).